Here is a 240-residue protein sequence, read N- to C-terminus: MSVKGVEMPEMTWDLDVGNKWRRRKVLSRIHRFWECRLRVWWLSDAGVRETDPPRPRRRPTWMTAVFHVICAVLLTLMIMAIGALIAYLRYYHQDSWRDMLHDLFCGCHYPEKCRRHHERQRSRRRAMDVPDPELGDPARRPLNGAMYYGSGCRFDTVEMVDETRPAPPALSSPETGDDSNDDAVAGGGAGGVTSSATRTTSSNALLPEWMDAVHVAVQAAVQATVQVSGPRENAVSPAT.

Residues 69 to 89 (VICAVLLTLMIMAIGALIAYL) traverse the membrane as a helical segment. 2 disordered regions span residues 119-143 (ERQR…RRPL) and 164-200 (TRPA…ATRT).

This sequence belongs to the HHV-5 UL136 protein family. In terms of assembly, interacts with host ATP1B1.

It localises to the host membrane. The polypeptide is Protein UL136 (UL136) (Human cytomegalovirus (strain Merlin) (HHV-5)).